We begin with the raw amino-acid sequence, 162 residues long: Caveolin-2 (162 aa).

Residues 1–86 are Cytoplasmic-facing; that stretch reads MGLETEKADV…FEISKYVVYK (86 aa). Y19 is modified (phosphotyrosine; by SRC). S20 and S23 each carry phosphoserine. Y27 bears the Phosphotyrosine; by SRC mark. S36 is modified (phosphoserine). An intramembrane region (helical) is located at residues 87-107; that stretch reads FLTVFLAIPLAFAAGILFATL. The Cytoplasmic segment spans residues 108-162; it reads SCLHIWIIMPFVKTCLMVLPSVQTVWKTVTDVVIAPLCASVGRSFSSVSLQLSHD.

Belongs to the caveolin family. As to quaternary structure, monomer or homodimer. Interacts with CAV1; the interaction forms a stable heterooligomeric complex that is required for targeting to lipid rafts and for caveolae formation. Tyrosine phosphorylated forms do not form heterooligomers with the Tyr-19-phosphorylated form existing as a monomer or dimer, and the Tyr-27-form as a monomer only. Interacts (tyrosine phosphorylated form) with the SH2 domain-containing proteins, RASA1, NCK1 and SRC. Interacts (tyrosine phosphorylated form) with INSR, the interaction (Tyr-27-phosphorylated form) is increased on insulin stimulation. Interacts (Tyr-19 phosphorylated form) with MAPK1 (phosphorylated form); the interaction, promoted by insulin, leads to nuclear location and MAPK1 activation. Interacts with STAT3; the interaction is increased on insulin-induced tyrosine phosphorylation leading to STAT activation. In terms of processing, phosphorylated on serine and tyrosine residues. CAV1 promotes phosphorylation on Ser-23 which then targets the complex to the plasma membrane, lipid rafts and caveolae. Phosphorylation on Ser-36 appears to modulate mitosis in endothelial cells. Phosphorylation on both Tyr-19 and Tyr-27 is required for insulin-induced 'Ser-727' phosphorylation of STAT3 and its activation. Phosphorylation on Tyr-19 is required for insulin-induced phosphorylation of MAPK1 and DNA binding of STAT3. Tyrosine phosphorylation is induced by both EGF and insulin (By. similarity).

It is found in the nucleus. The protein resides in the cytoplasm. It localises to the golgi apparatus membrane. Its subcellular location is the cell membrane. The protein localises to the membrane. It is found in the caveola. May act as a scaffolding protein within caveolar membranes. Interacts directly with G-protein alpha subunits and can functionally regulate their activity. Acts as an accessory protein in conjunction with CAV1 in targeting to lipid rafts and driving caveolae formation. The Ser-36 phosphorylated form has a role in modulating mitosis in endothelial cells. Positive regulator of cellular mitogenesis of the MAPK signaling pathway. Required for the insulin-stimulated nuclear translocation and activation of MAPK1 and STAT3, and the subsequent regulation of cell cycle progression. The polypeptide is Caveolin-2 (CAV2) (Loxodonta africana (African elephant)).